A 62-amino-acid polypeptide reads, in one-letter code: Conotoxin Lt5.8 (62 aa).

The signal sequence occupies residues M1 to T19. Residues M20–S47 constitute a propeptide that is removed on maturation. Q50 is modified (pyrrolidone carboxylic acid). Glutamine amide is present on Q61.

This sequence belongs to the conotoxin T superfamily. Post-translationally, contains 2 disulfide bonds that can be either 'C1-C3, C2-C4' or 'C1-C4, C2-C3', since these disulfide connectivities have been observed for conotoxins with cysteine framework V (for examples, see AC P0DQQ7 and AC P81755). As to expression, expressed by the venom duct.

It localises to the secreted. This Conus litteratus (Lettered cone) protein is Conotoxin Lt5.8.